A 145-amino-acid polypeptide reads, in one-letter code: Holo-[acyl-carrier-protein] synthase (145 aa).

Residues D8 and E59 each contribute to the Mg(2+) site.

This sequence belongs to the P-Pant transferase superfamily. AcpS family. Mg(2+) serves as cofactor.

It localises to the cytoplasm. The enzyme catalyses apo-[ACP] + CoA = holo-[ACP] + adenosine 3',5'-bisphosphate + H(+). Functionally, transfers the 4'-phosphopantetheine moiety from coenzyme A to a Ser of acyl-carrier-protein. The chain is Holo-[acyl-carrier-protein] synthase from Granulibacter bethesdensis (strain ATCC BAA-1260 / CGDNIH1).